The chain runs to 294 residues: Protease HtpX (294 aa).

A run of 2 helical transmembrane segments spans residues 4-24 and 34-52; these read IALF…VLSL and GLLI…VSLM. Position 139 (histidine 139) interacts with Zn(2+). Glutamate 140 is a catalytic residue. Histidine 143 contributes to the Zn(2+) binding site. 2 consecutive transmembrane segments (helical) span residues 158 to 178 and 194 to 214; these read VVNT…AGFL and LIYF…ASII. Residue glutamate 223 participates in Zn(2+) binding.

The protein belongs to the peptidase M48B family. It depends on Zn(2+) as a cofactor.

Its subcellular location is the cell inner membrane. This Klebsiella pneumoniae subsp. pneumoniae (strain ATCC 700721 / MGH 78578) protein is Protease HtpX.